Reading from the N-terminus, the 66-residue chain is Large ribosomal subunit protein bL33c (66 aa).

This sequence belongs to the bacterial ribosomal protein bL33 family.

It is found in the plastid. It localises to the chloroplast. This chain is Large ribosomal subunit protein bL33c, found in Oenothera argillicola (Appalachian evening primrose).